A 466-amino-acid chain; its full sequence is Ribulose bisphosphate carboxylase large chain (466 aa).

N6,N6,N6-trimethyllysine is present on Lys-4. Substrate is bound by residues Asn-113 and Thr-163. Residue Lys-165 is the Proton acceptor of the active site. Lys-167 is a substrate binding site. Mg(2+) is bound by residues Lys-191, Asp-193, and Glu-194. Lys-191 bears the N6-carboxylysine mark. Catalysis depends on His-284, which acts as the Proton acceptor. 3 residues coordinate substrate: Arg-285, His-317, and Ser-369.

The protein belongs to the RuBisCO large chain family. Type I subfamily. In terms of assembly, heterohexadecamer of 8 large chains and 8 small chains; disulfide-linked. The disulfide link is formed within the large subunit homodimers. It depends on Mg(2+) as a cofactor. In terms of processing, the disulfide bond which can form in the large chain dimeric partners within the hexadecamer appears to be associated with oxidative stress and protein turnover.

The protein localises to the plastid. Its subcellular location is the chloroplast. It carries out the reaction 2 (2R)-3-phosphoglycerate + 2 H(+) = D-ribulose 1,5-bisphosphate + CO2 + H2O. The catalysed reaction is D-ribulose 1,5-bisphosphate + O2 = 2-phosphoglycolate + (2R)-3-phosphoglycerate + 2 H(+). RuBisCO catalyzes two reactions: the carboxylation of D-ribulose 1,5-bisphosphate, the primary event in carbon dioxide fixation, as well as the oxidative fragmentation of the pentose substrate in the photorespiration process. Both reactions occur simultaneously and in competition at the same active site. The sequence is that of Ribulose bisphosphate carboxylase large chain from Aphelandra sinclairiana (Orange shrimp plant).